A 387-amino-acid polypeptide reads, in one-letter code: 1-deoxy-D-xylulose 5-phosphate reductoisomerase (387 aa).

Threonine 10, glycine 11, serine 12, valine 13, asparagine 38, and asparagine 119 together coordinate NADPH. Lysine 120 is a binding site for 1-deoxy-D-xylulose 5-phosphate. Residue glutamate 121 participates in NADPH binding. Aspartate 145 contributes to the Mn(2+) binding site. Residues serine 146, glutamate 147, serine 170, and histidine 193 each coordinate 1-deoxy-D-xylulose 5-phosphate. Mn(2+) is bound at residue glutamate 147. Glycine 199 serves as a coordination point for NADPH. Positions 206, 211, 212, and 215 each coordinate 1-deoxy-D-xylulose 5-phosphate. A Mn(2+)-binding site is contributed by glutamate 215.

This sequence belongs to the DXR family. It depends on Mg(2+) as a cofactor. Requires Mn(2+) as cofactor.

It catalyses the reaction 2-C-methyl-D-erythritol 4-phosphate + NADP(+) = 1-deoxy-D-xylulose 5-phosphate + NADPH + H(+). The protein operates within isoprenoid biosynthesis; isopentenyl diphosphate biosynthesis via DXP pathway; isopentenyl diphosphate from 1-deoxy-D-xylulose 5-phosphate: step 1/6. In terms of biological role, catalyzes the NADPH-dependent rearrangement and reduction of 1-deoxy-D-xylulose-5-phosphate (DXP) to 2-C-methyl-D-erythritol 4-phosphate (MEP). In Wolbachia sp. subsp. Drosophila simulans (strain wRi), this protein is 1-deoxy-D-xylulose 5-phosphate reductoisomerase.